A 296-amino-acid polypeptide reads, in one-letter code: Deleted in azoospermia-like (296 aa).

The span at 1 to 18 shows a compositional bias: polar residues; sequence MSAANPETPNSTISREAN. Positions 1-25 are disordered; that stretch reads MSAANPETPNSTISREANTQSSSAA. The 76-residue stretch at 40 to 115 folds into the RRM domain; it reads NTVFVGGIDV…KKLKLGPAIR (76 aa). Positions 80–132 are homodimerization; it reads KGYGFVSFFNDVDVQKIVESQINFHGKKLKLGPAIRKQNLCAYHVQPRPLVFN. In terms of domain architecture, DAZ spans 167–190; it reads AYPPYPNSPVQVITGYQLPVYNYQ. A Phosphotyrosine modification is found at tyrosine 277.

The protein belongs to the RRM DAZ family. In terms of assembly, homodimer and heterodimer. Forms a heterodimer with DAZ. Interacts with BOLL, DAZAP1 and DAZAP2. Interacts with PUM2 Multiple DAZL RRMs can bind to a single RNA containing multiple GUU triplets. As to expression, testis specific.

Its subcellular location is the cytoplasm. The protein resides in the nucleus. In terms of biological role, RNA-binding protein, which is essential for gametogenesis in both males and females. Plays a central role during spermatogenesis. Acts by binding to the 3'-UTR of mRNA, specifically recognizing GUU triplets, and thereby regulating the translation of key transcripts. In Callithrix jacchus (White-tufted-ear marmoset), this protein is Deleted in azoospermia-like (DAZL).